Consider the following 68-residue polypeptide: MDLQDRVTDLESRLAFQDDTIETLNDILVTQQRAVERLQLQMTALLKRQEEMGGQFETSEEEAPPPHY.

This sequence belongs to the SlyX family.

In Pseudomonas fluorescens (strain SBW25), this protein is Protein SlyX homolog.